Consider the following 79-residue polypeptide: Protein S100-G (79 aa).

Ser2 carries the post-translational modification N-acetylserine. EF-hand domains follow at residues 13–48 (IFEK…KGSS) and 45–79 (KGSS…KISQ). Ca(2+) is bound by residues Gln26 and Glu31. At Ser47 the chain carries Phosphoserine. Residues Asp58, Asn60, Asp62, Glu64, and Glu69 each coordinate Ca(2+).

This sequence belongs to the S-100 family.

The protein is Protein S100-G (S100G) of Equus caballus (Horse).